The chain runs to 225 residues: PKHD-type hydroxylase Smal_0990 (225 aa).

Residues 78–177 (KYLPPRFNRY…RVASFFWVQS (100 aa)) enclose the Fe2OG dioxygenase domain. Residues His96, Asp98, and His158 each coordinate Fe cation. Arg168 is a binding site for 2-oxoglutarate.

Fe(2+) is required as a cofactor. L-ascorbate serves as cofactor.

The protein is PKHD-type hydroxylase Smal_0990 of Stenotrophomonas maltophilia (strain R551-3).